The chain runs to 233 residues: Biosynthetic peptidoglycan transglycosylase (233 aa).

Residues Leu-8–Ile-28 form a helical membrane-spanning segment.

This sequence belongs to the glycosyltransferase 51 family.

The protein localises to the cell inner membrane. It carries out the reaction [GlcNAc-(1-&gt;4)-Mur2Ac(oyl-L-Ala-gamma-D-Glu-L-Lys-D-Ala-D-Ala)](n)-di-trans,octa-cis-undecaprenyl diphosphate + beta-D-GlcNAc-(1-&gt;4)-Mur2Ac(oyl-L-Ala-gamma-D-Glu-L-Lys-D-Ala-D-Ala)-di-trans,octa-cis-undecaprenyl diphosphate = [GlcNAc-(1-&gt;4)-Mur2Ac(oyl-L-Ala-gamma-D-Glu-L-Lys-D-Ala-D-Ala)](n+1)-di-trans,octa-cis-undecaprenyl diphosphate + di-trans,octa-cis-undecaprenyl diphosphate + H(+). It participates in cell wall biogenesis; peptidoglycan biosynthesis. Functionally, peptidoglycan polymerase that catalyzes glycan chain elongation from lipid-linked precursors. This chain is Biosynthetic peptidoglycan transglycosylase, found in Neisseria meningitidis serogroup C / serotype 2a (strain ATCC 700532 / DSM 15464 / FAM18).